We begin with the raw amino-acid sequence, 120 residues long: Immunoglobulin lambda variable 4-60 (120 aa).

The signal sequence occupies residues 1–21 (MAWTPLLLLFPLLLHCTGSLS). A framework-1 region spans residues 22–46 (QPVLTQSSSASASLGSSVKLTCTLS). The Ig-like domain occupies 23 to 120 (PVLTQSSSAS…YYCETWDSNT (98 aa)). A disulfide bridge links C43 with C113. A complementarity-determining-1 region spans residues 47–53 (SGHSSYI). The framework-2 stretch occupies residues 54–70 (IAWHQQQPGKAPRYLMK). The interval 71 to 77 (LEGSGSY) is complementarity-determining-2. The framework-3 stretch occupies residues 78 to 113 (NKGSGVPDRFSGSSSGADRYLTISNLQFEDEADYYC). Residues 114 to 120 (ETWDSNT) form a complementarity-determining-3 region.

In terms of assembly, immunoglobulins are composed of two identical heavy chains and two identical light chains; disulfide-linked.

It is found in the secreted. Its subcellular location is the cell membrane. V region of the variable domain of immunoglobulin light chains that participates in the antigen recognition. Immunoglobulins, also known as antibodies, are membrane-bound or secreted glycoproteins produced by B lymphocytes. In the recognition phase of humoral immunity, the membrane-bound immunoglobulins serve as receptors which, upon binding of a specific antigen, trigger the clonal expansion and differentiation of B lymphocytes into immunoglobulins-secreting plasma cells. Secreted immunoglobulins mediate the effector phase of humoral immunity, which results in the elimination of bound antigens. The antigen binding site is formed by the variable domain of one heavy chain, together with that of its associated light chain. Thus, each immunoglobulin has two antigen binding sites with remarkable affinity for a particular antigen. The variable domains are assembled by a process called V-(D)-J rearrangement and can then be subjected to somatic hypermutations which, after exposure to antigen and selection, allow affinity maturation for a particular antigen. This chain is Immunoglobulin lambda variable 4-60, found in Homo sapiens (Human).